Consider the following 2179-residue polypeptide: Axotactin (2179 aa).

The first 18 residues, 1–18 (MAFPYIWALLPLICSASG), serve as a signal peptide directing secretion. Topologically, residues 19 to 1816 (LSLPNMTSTD…DENKQEDSTQ (1798 aa)) are extracellular. 2 N-linked (GlcNAc...) asparagine glycosylation sites follow: Asn23 and Asn52. Positions 59–107 (GGLAGSSTGGQSLPDTGGGNSAGGSPAGGSSGTGGGGSNSGISGNNSAM) are disordered. Gly residues predominate over residues 74 to 97 (TGGGNSAGGSPAGGSSGTGGGGSN). Asn103 carries N-linked (GlcNAc...) asparagine glycosylation. Positions 119–170 (CAGPGDPGPCKQYIYKWRYEPTTNECTNFIWGGCEGNPQNRFGTEAECLFHC) constitute a BPTI/Kunitz inhibitor domain. Disulfide bonds link Cys119–Cys170, Cys128–Cys152, and Cys144–Cys166. The segment at 201–220 (YTQSPAQSPDGMGGAEGGDG) is disordered. Gly residues predominate over residues 211-220 (GMGGAEGGDG). In terms of domain architecture, Laminin G-like 1 spans 242-438 (KTFIFAKNNT…TKHENVNEGC (197 aa)). A glycan (N-linked (GlcNAc...) asparagine) is linked at Asn249. 4 disulfides stabilise this stretch: Cys405-Cys438, Cys442-Cys455, Cys449-Cys464, and Cys466-Cys476. The region spanning 439-477 (SDMCESRHNLCFVGSRCINHYGGISCDCFGTHYEGEHCD) is the EGF-like 1 domain. Laminin G-like domains follow at residues 481–664 (ATII…AEFV) and 660–839 (EAEF…LDNC). Residues Asn542, Asn571, and Asn741 are each glycosylated (N-linked (GlcNAc...) asparagine). 4 disulfides stabilise this stretch: Cys808–Cys839, Cys845–Cys857, Cys851–Cys866, and Cys868–Cys878. The EGF-like 2 domain occupies 841–879 (YIDPCKRPNTCEHGGKCFVKDDRVTCDCKHTGYIGKNCH). Residues Asn925, Asn1000, Asn1019, and Asn1026 are each glycosylated (N-linked (GlcNAc...) asparagine). One can recognise a Laminin G-like 4 domain in the interval 1087–1259 (YVVTFTTSQS…VHLSEIIKDC (173 aa)). 4 disulfides stabilise this stretch: Cys1231–Cys1259, Cys1263–Cys1274, Cys1268–Cys1283, and Cys1285–Cys1296. Positions 1260–1297 (KPSCVPSPCRNGAQCKELWSSFKCVCNNPWAHIGEFCE) constitute an EGF-like 3 domain. The Laminin G-like 5 domain occupies 1316 to 1526 (RNYLSVGATP…PTQEGVLPNC (211 aa)). N-linked (GlcNAc...) asparagine glycosylation is present at Asn1393. 4 disulfides stabilise this stretch: Cys1494-Cys1526, Cys1530-Cys1541, Cys1535-Cys1552, and Cys1554-Cys1564. One can recognise an EGF-like 4 domain in the interval 1527-1565 (QIKCDAEPCKNGGTCQEHFAEQLSTCDCEHTSFLGEFCS). The region spanning 1569–1765 (GADFSGESTL…NPQGVRSAQC (197 aa)) is the Laminin G-like 6 domain. N-linked (GlcNAc...) asparagine glycosylation is found at Asn1667, Asn1707, Asn1751, and Asn1782. A disulfide bridge links Cys1722 with Cys1765. The helical transmembrane segment at 1817–1837 (VVFLTLTSVFVIIVICCLLEV) threads the bilayer. The Cytoplasmic segment spans residues 1838 to 2179 (YRSHLAYKKR…TSIDSILSLD (342 aa)). Disordered stretches follow at residues 1891–2141 (YTYK…PTLF) and 2156–2179 (SYLG…LSLD). Residues 1916 to 1930 (GSATPSQPGTPTALS) show a composition bias toward polar residues. Acidic residues predominate over residues 1940 to 1949 (EEEEEEEDEA). Positions 1954–1966 (AAEKSGENEEPPA) are enriched in basic and acidic residues. Composition is skewed to polar residues over residues 1969 to 1981 (TTAS…QAQP) and 2010 to 2025 (EPSS…QLAQ). The segment covering 2064 to 2079 (PQEHKSRHKATDDTEA) has biased composition (basic and acidic residues). A compositionally biased stretch (low complexity) spans 2082–2091 (QQQQQQQQQQ). Composition is skewed to polar residues over residues 2092-2105 (SFDV…SSLP) and 2165-2179 (PRSN…LSLD).

The protein localises to the cell projection. The protein resides in the axon. It is found in the membrane. May have serine protease inhibitor activity. Might play a role in the glial-neuronal signaling pathway that is important in establishing the electrical properties of axonal membranes. The polypeptide is Axotactin (Drosophila melanogaster (Fruit fly)).